The following is a 402-amino-acid chain: S-adenosylmethionine synthase (402 aa).

Position 17 (His17) interacts with ATP. Asp19 serves as a coordination point for Mg(2+). Residue Glu45 coordinates K(+). Residues Glu58 and Gln101 each coordinate L-methionine. The interval 101–111 (QSSDIADGVNE) is flexible loop. Residues 177–179 (DAK), 244–245 (RF), Asp253, 259–260 (RK), Ala276, and Lys280 contribute to the ATP site. An L-methionine-binding site is contributed by Asp253. Residue Lys284 participates in L-methionine binding.

Belongs to the AdoMet synthase family. In terms of assembly, homotetramer; dimer of dimers. The cofactor is Mg(2+). K(+) serves as cofactor.

Its subcellular location is the cytoplasm. It catalyses the reaction L-methionine + ATP + H2O = S-adenosyl-L-methionine + phosphate + diphosphate. It functions in the pathway amino-acid biosynthesis; S-adenosyl-L-methionine biosynthesis; S-adenosyl-L-methionine from L-methionine: step 1/1. Its function is as follows. Catalyzes the formation of S-adenosylmethionine (AdoMet) from methionine and ATP. The overall synthetic reaction is composed of two sequential steps, AdoMet formation and the subsequent tripolyphosphate hydrolysis which occurs prior to release of AdoMet from the enzyme. This chain is S-adenosylmethionine synthase, found in Lactobacillus johnsonii (strain CNCM I-12250 / La1 / NCC 533).